A 340-amino-acid chain; its full sequence is Putative Ig-like domain-containing protein C1 (340 aa).

An Ig-like domain is found at 207 to 294; sequence PTVTVTGIER…SSPRVMVPTI (88 aa).

The protein is Putative Ig-like domain-containing protein C1 of Sus scrofa (Pig).